Reading from the N-terminus, the 567-residue chain is Thiol:disulfide interchange protein DsbD (567 aa).

Residues M1–A19 form the signal peptide. 2 disulfides stabilise this stretch: C122/C128 and C185/C307. The next 8 membrane-spanning stretches (helical) occupy residues L166–V186, L211–V231, Y246–F266, I299–I319, W326–V346, W360–L380, A387–T407, and I418–A438. A Thioredoxin domain is found at Q435 to P567. An intrachain disulfide couples C482 to C485.

The protein belongs to the thioredoxin family. DsbD subfamily.

The protein resides in the cell inner membrane. It carries out the reaction [protein]-dithiol + NAD(+) = [protein]-disulfide + NADH + H(+). The enzyme catalyses [protein]-dithiol + NADP(+) = [protein]-disulfide + NADPH + H(+). Its function is as follows. Required to facilitate the formation of correct disulfide bonds in some periplasmic proteins and for the assembly of the periplasmic c-type cytochromes. Acts by transferring electrons from cytoplasmic thioredoxin to the periplasm. This transfer involves a cascade of disulfide bond formation and reduction steps. This is Thiol:disulfide interchange protein DsbD from Salmonella paratyphi A (strain ATCC 9150 / SARB42).